Consider the following 203-residue polypeptide: Glycerol-3-phosphate acyltransferase (203 aa).

5 helical membrane-spanning segments follow: residues 10–30 (LLLGLTALLAYLLGSVPFGIM), 60–80 (LAAFLTLVLDAGKGAIAVFLA), 88–108 (AAQLAGFAAFLGHCFPVFLGF), 118–138 (LGTLLALAWPIGLAACAIWAI), and 162–182 (FTLGLPSAVVFCAALATLIFL).

The protein belongs to the PlsY family. Probably interacts with PlsX.

It localises to the cell inner membrane. It catalyses the reaction an acyl phosphate + sn-glycerol 3-phosphate = a 1-acyl-sn-glycero-3-phosphate + phosphate. Its pathway is lipid metabolism; phospholipid metabolism. Its function is as follows. Catalyzes the transfer of an acyl group from acyl-phosphate (acyl-PO(4)) to glycerol-3-phosphate (G3P) to form lysophosphatidic acid (LPA). This enzyme utilizes acyl-phosphate as fatty acyl donor, but not acyl-CoA or acyl-ACP. This Jannaschia sp. (strain CCS1) protein is Glycerol-3-phosphate acyltransferase.